The sequence spans 620 residues: Protein NRT1/ PTR FAMILY 2.13 (620 aa).

Positions 1–32 (MVLEDRKDGSSLPGRSGSFSKSSPSELDVVDP) are disordered. The segment covering 10 to 25 (SSLPGRSGSFSKSSPS) has biased composition (low complexity). The next 12 helical transmembrane spans lie at 70–90 (LGSI…FHLE), 95–115 (ANVI…GAYI), 126–146 (IAFA…TASF), 167–187 (KLQI…SGGI), 213–233 (FFNW…TVVV), 241–261 (WIIG…MFFA), 364–384 (IVPI…QGTF), 402–422 (IPAG…LPFY), 443–463 (LQRI…AGIV), 485–505 (VFWL…NIIG), 524–544 (SLFS…VTVV), and 568–588 (YFYY…WYCA).

The protein belongs to the major facilitator superfamily. Proton-dependent oligopeptide transporter (POT/PTR) (TC 2.A.17) family. Interacts with NLA. In terms of processing, ubiquitinated by NLA. Ubiquitination of NPF2.13 leads to its degradation by the proteasome. As to expression, expressed in leaves and flowers. Detected in stems and siliques. Highest expression in the distal lamina of older leaves. Restricted to the sieve element and companion cell complex of the minor vein.

It localises to the cell membrane. Low-affinity proton-dependent nitrate transporter. Not involved in dipeptides transport, but has a weak glucosinolate transport activity. Involved in phloem loading and nitrate remobilization from the older leaves to other tissues. The sequence is that of Protein NRT1/ PTR FAMILY 2.13 (NPF2.13) from Arabidopsis thaliana (Mouse-ear cress).